Here is a 282-residue protein sequence, read N- to C-terminus: Bifunctional protein FolD 2 (282 aa).

NADP(+) contacts are provided by residues 165 to 167 and S190; that span reads GRS.

It belongs to the tetrahydrofolate dehydrogenase/cyclohydrolase family. Homodimer.

The enzyme catalyses (6R)-5,10-methylene-5,6,7,8-tetrahydrofolate + NADP(+) = (6R)-5,10-methenyltetrahydrofolate + NADPH. It catalyses the reaction (6R)-5,10-methenyltetrahydrofolate + H2O = (6R)-10-formyltetrahydrofolate + H(+). Its pathway is one-carbon metabolism; tetrahydrofolate interconversion. Catalyzes the oxidation of 5,10-methylenetetrahydrofolate to 5,10-methenyltetrahydrofolate and then the hydrolysis of 5,10-methenyltetrahydrofolate to 10-formyltetrahydrofolate. The protein is Bifunctional protein FolD 2 of Acinetobacter baylyi (strain ATCC 33305 / BD413 / ADP1).